Here is a 154-residue protein sequence, read N- to C-terminus: AP-1 complex subunit sigma-3 (154 aa).

The protein belongs to the adaptor complexes small subunit family. Adaptor protein complex 1 (AP-1) is a heterotetramer composed of two large adaptins (gamma-type subunit AP1G1 and beta-type subunit AP1B1), a medium adaptin (mu-type subunit AP1M1 or AP1M2) and a small adaptin (sigma-type subunit AP1S1 or AP1S2 or AP1S3).

The protein resides in the golgi apparatus. It localises to the cytoplasmic vesicle membrane. The protein localises to the membrane. Its subcellular location is the clathrin-coated pit. Subunit of clathrin-associated adaptor protein complex 1 that plays a role in protein sorting in the late-Golgi/trans-Golgi network (TGN) and/or endosomes. The AP complexes mediate both the recruitment of clathrin to membranes and the recognition of sorting signals within the cytosolic tails of transmembrane cargo molecules. Involved in TLR3 trafficking. The chain is AP-1 complex subunit sigma-3 (Ap1s3) from Mus musculus (Mouse).